The primary structure comprises 158 residues: Small ribosomal subunit protein uS7 (158 aa).

This sequence belongs to the universal ribosomal protein uS7 family. As to quaternary structure, part of the 30S ribosomal subunit. Contacts proteins S9 and S11.

One of the primary rRNA binding proteins, it binds directly to 16S rRNA where it nucleates assembly of the head domain of the 30S subunit. Is located at the subunit interface close to the decoding center, probably blocks exit of the E-site tRNA. This chain is Small ribosomal subunit protein uS7, found in Porphyromonas gingivalis (strain ATCC BAA-308 / W83).